A 372-amino-acid polypeptide reads, in one-letter code: MSNQHILLVSSLLPVGSNISTWWNFGSMLLTCLMLQILTGFFLAIHYTANINLAFSSVIHIMRDVPYGWIMQNLHAISASLFFICVYIHIARGLYYGLYLNKEVWLSGMTLLVFLMATAFFGYVLPWGQMSFWAATVITNLLTAMPYLGTMLTTWLWGGFSINDPTLTRFFALHFILPFVIISLSSIHIMLLHNEGSNNPLGTNSDIDKIPFHPYHSYKDMLMITTMITLLFLILSFSPNLLNDPENFSKANPIVTPQHIKPEWYFLFAYGILRSIPNKLGGTLALLLSVVILTTAPFTHTSHTRSMIFRPLSQILFWTFIATFITITWTASKPVEPPFILISQTTSIFYFSFFIMAPLLGWAENKIMMLNN.

4 helical membrane passes run 25–45, 69–90, 105–125, and 170–190; these read FGSM…FLAI, WIMQ…YIHI, WLSG…GYVL, and FFAL…IHIM. Positions 75 and 89 each coordinate heme b. Positions 174 and 188 each coordinate heme b. Histidine 193 is an a ubiquinone binding site. A run of 4 helical transmembrane segments spans residues 218-238, 280-300, 312-332, and 339-358; these read YKDM…LSFS, LGGT…PFTH, LSQI…WTAS, and FILI…IMAP.

This sequence belongs to the cytochrome b family. The cytochrome bc1 complex contains 3 respiratory subunits (MT-CYB, CYC1 and UQCRFS1), 2 core proteins (UQCRC1 and UQCRC2) and probably 6 low-molecular weight proteins. The cofactor is heme b.

It localises to the mitochondrion inner membrane. Component of the ubiquinol-cytochrome c reductase complex (complex III or cytochrome b-c1 complex) that is part of the mitochondrial respiratory chain. The b-c1 complex mediates electron transfer from ubiquinol to cytochrome c. Contributes to the generation of a proton gradient across the mitochondrial membrane that is then used for ATP synthesis. This chain is Cytochrome b (MT-CYB), found in Hemachatus haemachatus (Rinkhals).